The following is a 734-amino-acid chain: MATKFPKFSQGLAQDPTTRRIWFGIATSHDFESHDGMTENNLYQKIFASHFGQLAIIFLWTSGNLFHVAWQGNFEQWIKDPLHIRPIAHAISDPHFGQPAIEAFTRSQFPGPVNIAYSGVYQWWYTIGLRTNVDLYNGSMFLLFIATLALFAGWLHLEPKYSPKVSWFKDAESRLNHHLSALFGLSSLAWSGHLIHVAIPESRGIHVRWDNFLSQLPHPSGLEPFFKGNWSLYSENPDSLTHVFGTASGAGTAVLTFLGGFHPETKSLWLTDIAHHHLAIAVLFIVAGHMYRTNFAIGHRIDDILNAHKAPSGKLGLGHFGLYETINNSLHFQLGLALASLGVITSLVAQHMYSLSPYAFLIQDRTTMAALYTHHQYIAGFIMTGAFAHGAIFFIRDFDEEKNKGNVLSRILDHKEAIISHLSWVTLFLGFHTLGLYVHNDVMQAFGTPEKQILIEPVFAQWIQSAHGKNIYELNILLSSDSSNAFSASQAIWLPGWLNGINDKSTSLFLQIGPGDFLVHHAIALGLHTTTLILVKGALDARGSRLMPDKKDFGYSFPCDGPGRGGTCDISAWDAFYLAVFWMLNTIGWTTFYWHWKHITLWQGNVGQFNESSTYLMGWLRDYLWLNSSQLINGYNPFGMNSLAVWGWMFLFGHLVWATGFMFLISWRGYWQELIETLVWAHERTPITNVFKWTDKPVALSIVQARLVGLAHFSVGYVFTYAAFLIASTSAKFG.

8 helical membrane passes run 46–69, 135–158, 175–199, 273–291, 330–353, 369–395, 417–439, and 517–535; these read IFAS…FHVA, LYNG…LHLE, LNHH…HVAI, IAHH…GHMY, LHFQ…QHMY, AALY…IFFI, AIIS…LYVH, and FLVH…LILV. [4Fe-4S] cluster is bound by residues C559 and C568. Transmembrane regions (helical) follow at residues 575 to 596 and 643 to 665; these read AFYL…YWHW and LAVW…MFLI. 3 residues coordinate chlorophyll a: H654, M662, and Y670. W671 is a binding site for phylloquinone. A helical membrane pass occupies residues 707-727; sequence LVGLAHFSVGYVFTYAAFLIA.

It belongs to the PsaA/PsaB family. The PsaA/B heterodimer binds the P700 chlorophyll special pair and subsequent electron acceptors. PSI consists of a core antenna complex that captures photons, and an electron transfer chain that converts photonic excitation into a charge separation. The eukaryotic PSI reaction center is composed of at least 11 subunits. The cofactor is P700 is a chlorophyll a/chlorophyll a' dimer, A0 is one or more chlorophyll a, A1 is one or both phylloquinones and FX is a shared 4Fe-4S iron-sulfur center..

It localises to the plastid. Its subcellular location is the chloroplast thylakoid membrane. The enzyme catalyses reduced [plastocyanin] + hnu + oxidized [2Fe-2S]-[ferredoxin] = oxidized [plastocyanin] + reduced [2Fe-2S]-[ferredoxin]. PsaA and PsaB bind P700, the primary electron donor of photosystem I (PSI), as well as the electron acceptors A0, A1 and FX. PSI is a plastocyanin/cytochrome c6-ferredoxin oxidoreductase, converting photonic excitation into a charge separation, which transfers an electron from the donor P700 chlorophyll pair to the spectroscopically characterized acceptors A0, A1, FX, FA and FB in turn. Oxidized P700 is reduced on the lumenal side of the thylakoid membrane by plastocyanin or cytochrome c6. The chain is Photosystem I P700 chlorophyll a apoprotein A2 from Euglena gracilis.